The chain runs to 268 residues: WUSCHEL-related homeobox 11 (268 aa).

Positions 1 to 35 (MDQEQTPHSPTRHSRSPPSSASGSTSAEPVRSRWS) are disordered. Residues 16 to 27 (SPPSSASGSTSA) are compositionally biased toward low complexity. Positions 29–93 (PVRSRWSPKP…NRRSRSRRRQ (65 aa)) form a DNA-binding region, homeobox; WUS-type.

Belongs to the WUS homeobox family.

It localises to the nucleus. Functionally, transcription factor which may be involved in developmental processes. The sequence is that of WUSCHEL-related homeobox 11 (WOX11) from Arabidopsis thaliana (Mouse-ear cress).